Consider the following 276-residue polypeptide: Probable endonuclease 4 (276 aa).

Zn(2+)-binding residues include His-70, His-108, Glu-144, Asp-177, His-180, His-211, Asp-224, His-226, and Glu-256.

This sequence belongs to the AP endonuclease 2 family. The cofactor is Zn(2+).

The catalysed reaction is Endonucleolytic cleavage to 5'-phosphooligonucleotide end-products.. Endonuclease IV plays a role in DNA repair. It cleaves phosphodiester bonds at apurinic or apyrimidinic (AP) sites, generating a 3'-hydroxyl group and a 5'-terminal sugar phosphate. This Metamycoplasma arthritidis (strain 158L3-1) (Mycoplasma arthritidis) protein is Probable endonuclease 4.